Here is a 263-residue protein sequence, read N- to C-terminus: MALKHYKNSDSTVFNDAKALFDLNKNILLKGPTGSGKTKLAETLSEVVDTPMHQVNCSVDLDTESLLGFKTIKTNAEGQQEIVFLDGPVIKAMKEGHILYIDEINMAKPETLPVLNGVLDYRRQITNPYTGEVIKAVPGFNVIAAINEGYVGTLPMNEALKNRFVVIHVDYIDGDILKNVIKEQSLLQDDKQIEQIIKFNEDLRTMSKQGQISEEAASIRALLDLCDLITVMPVERAIKRTIIDKLEDEREQQAIYNAVELNF.

31 to 38 (GPTGSGKT) serves as a coordination point for ATP.

Belongs to the CbbQ/NirQ/NorQ/GpvN family.

This is an uncharacterized protein from Staphylococcus aureus (strain bovine RF122 / ET3-1).